The primary structure comprises 290 residues: Ribonuclease 3 (290 aa).

An RNase III domain is found at 20–145 (YSCFYRILGF…FIGAIYLDRG (126 aa)). Glutamate 62 contributes to the Mg(2+) binding site. The active site involves aspartate 66. Asparagine 131 and glutamate 134 together coordinate Mg(2+). The active site involves glutamate 134. A DRBM domain is found at 173-242 (NFKSKLIEWS…AQMTLKKIKG (70 aa)). The interval 254–290 (KTQNNVPAEDTTPESEMSLTAENQQIDEIISTEEISV) is disordered. The segment covering 267 to 279 (ESEMSLTAENQQI) has biased composition (polar residues).

The protein belongs to the ribonuclease III family. As to quaternary structure, homodimer. Mg(2+) is required as a cofactor.

The protein resides in the cytoplasm. It catalyses the reaction Endonucleolytic cleavage to 5'-phosphomonoester.. Functionally, digests double-stranded RNA. Involved in the processing of primary rRNA transcript to yield the immediate precursors to the large and small rRNAs (23S and 16S). Processes some mRNAs, and tRNAs when they are encoded in the rRNA operon. Processes pre-crRNA and tracrRNA of type II CRISPR loci if present in the organism. This is Ribonuclease 3 from Bacteroides fragilis (strain YCH46).